The primary structure comprises 337 residues: Ferrochelatase (337 aa).

Fe cation contacts are provided by histidine 189 and glutamate 293.

The protein belongs to the ferrochelatase family.

The protein resides in the cytoplasm. It carries out the reaction heme b + 2 H(+) = protoporphyrin IX + Fe(2+). The protein operates within porphyrin-containing compound metabolism; protoheme biosynthesis; protoheme from protoporphyrin-IX: step 1/1. Functionally, catalyzes the ferrous insertion into protoporphyrin IX. The protein is Ferrochelatase of Pseudomonas putida (strain W619).